Here is a 749-residue protein sequence, read N- to C-terminus: Replication restart protein PriA (749 aa).

Residues 224–391 enclose the Helicase ATP-binding domain; that stretch reads SLKTSQFHTH…LSGKYVLSRL (168 aa). 237–244 is a binding site for ATP; sequence GITGSGKT. A DEAH box motif is present at residues 333–336; it reads DEEH. Cys454, Cys457, Cys463, Cys466, Cys481, Cys484, Cys495, and Cys498 together coordinate Zn(2+). In terms of domain architecture, Helicase C-terminal spans 490-658; the sequence is DLPQSCPKCL…EYPPFIRLIR (169 aa).

Belongs to the helicase family. PriA subfamily. Component of the replication restart primosome. Zn(2+) is required as a cofactor.

It carries out the reaction Couples ATP hydrolysis with the unwinding of duplex DNA by translocating in the 3'-5' direction.. The catalysed reaction is ATP + H2O = ADP + phosphate + H(+). Functionally, initiates the restart of stalled replication forks, which reloads the replicative helicase on sites other than the origin of replication. Recognizes and binds to abandoned replication forks and remodels them to uncover a helicase loading site. Promotes assembly of the primosome at these replication forks. This chain is Replication restart protein PriA, found in Chlamydia pneumoniae (Chlamydophila pneumoniae).